The primary structure comprises 107 residues: MGCIDKLNYEILYKGGFKECAEYIRKNFKNIKEMEAGYEIFEGIFLIGIPPIPVAYEDNYVIFPYTKPCYGTFVLKINLDEINKDKKEEKKEKDKGKKGLLSRLKFW.

Positions glutamate 88–lysine 97 are enriched in basic and acidic residues. Residues glutamate 88–tryptophan 107 are disordered. Residues lysine 98–tryptophan 107 show a composition bias toward basic residues.

This is an uncharacterized protein from Methanocaldococcus jannaschii (strain ATCC 43067 / DSM 2661 / JAL-1 / JCM 10045 / NBRC 100440) (Methanococcus jannaschii).